Reading from the N-terminus, the 802-residue chain is E3 ubiquitin-protein ligase RNF10 (802 aa).

3 stretches are compositionally biased toward low complexity: residues 1 to 31, 78 to 90, and 104 to 113; these read MPQS…SGSS, SNQS…QKSK, and SKPFSSSSNG. The interval 1-134 is disordered; it reads MPQSSPSTAA…AEFSPAQFSG (134 aa). A Phosphoserine modification is found at Ser-5. Ser-110 bears the Phosphoserine mark. The span at 114–124 shows a compositional bias: basic and acidic residues; that stretch reads GRRDEVAEAQR. Position 128 is a phosphoserine (Ser-128). Residues 225–267 form an RING-type zinc finger; it reads CPICLYPPTAAKITRCGHIFCWACILHYLSLSERTWSKCPICY. Residues 645–654 are compositionally biased toward polar residues; sequence DSALGPTSTE. Disordered stretches follow at residues 645–664, 716–753, and 767–802; these read DSAL…LSPL, DGWP…VPSF, and KLDT…VHTK. Residues 716 to 728 show a composition bias toward basic and acidic residues; the sequence is DGWPKAAPKKDDN. A compositionally biased stretch (polar residues) spans 793–802; it reads LFSTSVVHTK.

The protein belongs to the RNF10 family. In terms of assembly, interacts with MEOX2.

The protein resides in the cytoplasm. Its subcellular location is the nucleus. The enzyme catalyses S-ubiquitinyl-[E2 ubiquitin-conjugating enzyme]-L-cysteine + [acceptor protein]-L-lysine = [E2 ubiquitin-conjugating enzyme]-L-cysteine + N(6)-ubiquitinyl-[acceptor protein]-L-lysine.. The protein operates within protein modification; protein ubiquitination. Functionally, E3 ubiquitin-protein ligase that catalyzes monoubiquitination of 40S ribosomal proteins RPS2/us5 and RPS3/us3 in response to ribosome stalling. Part of a ribosome quality control that takes place when ribosomes have stalled during translation initiation (iRQC): RNF10 acts by mediating monoubiquitination of RPS2/us5 and RPS3/us3, promoting their degradation by the proteasome. Also promotes ubiquitination of 40S ribosomal proteins in response to ribosome stalling during translation elongation. The action of RNF10 in iRQC is counteracted by USP10. May also act as a transcriptional factor involved in the regulation of MAG (Myelin-associated glycoprotein) expression. Acts as a regulator of Schwann cell differentiation and myelination. The sequence is that of E3 ubiquitin-protein ligase RNF10 from Rattus norvegicus (Rat).